Consider the following 185-residue polypeptide: Dual-action ribosomal maturation protein DarP (185 aa).

A disordered region spans residues 1 to 22 (MWKNGAMRGCNKETGEFLGPSR).

The protein belongs to the DarP family.

Its subcellular location is the cytoplasm. Functionally, member of a network of 50S ribosomal subunit biogenesis factors which assembles along the 30S-50S interface, preventing incorrect 23S rRNA structures from forming. Promotes peptidyl transferase center (PTC) maturation. The protein is Dual-action ribosomal maturation protein DarP of Xylella fastidiosa (strain 9a5c).